The following is a 525-amino-acid chain: Nucleolar complex protein 4 homolog B (525 aa).

Residues 1–10 (MAARKAKHAF) are compositionally biased toward basic residues. The disordered stretch occupies residues 1–21 (MAARKAKHAFRSQATQSDAER). 3 consecutive transmembrane segments (helical) span residues 307 to 327 (AAYDVGGAISLLALNGLFILI), 358 to 378 (FFHLANLFLSSTHLPVYLVAA), and 386 to 406 (LALTAPPQVLLMIIPFICNLI).

It belongs to the CBF/MAK21 family.

It localises to the nucleus membrane. It is found in the nucleus. The protein localises to the nucleolus. In Xenopus laevis (African clawed frog), this protein is Nucleolar complex protein 4 homolog B (noc4l-b).